A 286-amino-acid polypeptide reads, in one-letter code: 33 kDa chaperonin (286 aa).

Disulfide bonds link C236–C238 and C264–C267.

It belongs to the HSP33 family. Under oxidizing conditions two disulfide bonds are formed involving the reactive cysteines. Under reducing conditions zinc is bound to the reactive cysteines and the protein is inactive.

It localises to the cytoplasm. In terms of biological role, redox regulated molecular chaperone. Protects both thermally unfolding and oxidatively damaged proteins from irreversible aggregation. Plays an important role in the bacterial defense system toward oxidative stress. This is 33 kDa chaperonin from Carboxydothermus hydrogenoformans (strain ATCC BAA-161 / DSM 6008 / Z-2901).